Here is a 282-residue protein sequence, read N- to C-terminus: Pantothenate synthetase (282 aa).

33-40 (MGALHAGH) lines the ATP pocket. His40 serves as the catalytic Proton donor. Gln64 serves as a coordination point for (R)-pantoate. Gln64 is a binding site for beta-alanine. 150-153 (GEKD) contacts ATP. Gln156 contributes to the (R)-pantoate binding site. ATP is bound by residues Val179 and 187–190 (LSSR).

The protein belongs to the pantothenate synthetase family. In terms of assembly, homodimer.

The protein resides in the cytoplasm. The catalysed reaction is (R)-pantoate + beta-alanine + ATP = (R)-pantothenate + AMP + diphosphate + H(+). Its pathway is cofactor biosynthesis; (R)-pantothenate biosynthesis; (R)-pantothenate from (R)-pantoate and beta-alanine: step 1/1. Its function is as follows. Catalyzes the condensation of pantoate with beta-alanine in an ATP-dependent reaction via a pantoyl-adenylate intermediate. This is Pantothenate synthetase from Rhodospirillum rubrum (strain ATCC 11170 / ATH 1.1.1 / DSM 467 / LMG 4362 / NCIMB 8255 / S1).